Reading from the N-terminus, the 462-residue chain is Probable serine/threonine-protein kinase DDB_G0286841 (462 aa).

Residues 64–358 (FNFLKVISKG…VDEVKCHPFF (295 aa)) form the Protein kinase domain. ATP is bound by residues 70–78 (ISKGGFGKV) and lysine 93. Aspartate 188 (proton acceptor) is an active-site residue. The 104-residue stretch at 359-462 (SEINWKIYED…LFIDFDFPTY (104 aa)) folds into the AGC-kinase C-terminal domain. Residues 414-439 (NIYKNNNNNNNNNNNNNNNNNNNNNN) are compositionally biased toward low complexity. The tract at residues 414-447 (NIYKNNNNNNNNNNNNNNNNNNNNNNDDNDDENN) is disordered.

This sequence belongs to the protein kinase superfamily. AGC Ser/Thr protein kinase family.

The catalysed reaction is L-seryl-[protein] + ATP = O-phospho-L-seryl-[protein] + ADP + H(+). The enzyme catalyses L-threonyl-[protein] + ATP = O-phospho-L-threonyl-[protein] + ADP + H(+). The chain is Probable serine/threonine-protein kinase DDB_G0286841 from Dictyostelium discoideum (Social amoeba).